The chain runs to 575 residues: UvrABC system protein C (575 aa).

The GIY-YIG domain occupies 15-90; that stretch reads AEPGVYQFEA…IKRHQPRYNV (76 aa). The UVR domain occupies 198–233; the sequence is GVLAEPLRREMETAAASQAFERAASLRDRLEAVETF.

The protein belongs to the UvrC family. In terms of assembly, interacts with UvrB in an incision complex.

Its subcellular location is the cytoplasm. The UvrABC repair system catalyzes the recognition and processing of DNA lesions. UvrC both incises the 5' and 3' sides of the lesion. The N-terminal half is responsible for the 3' incision and the C-terminal half is responsible for the 5' incision. The protein is UvrABC system protein C of Natronomonas pharaonis (strain ATCC 35678 / DSM 2160 / CIP 103997 / JCM 8858 / NBRC 14720 / NCIMB 2260 / Gabara) (Halobacterium pharaonis).